A 200-amino-acid polypeptide reads, in one-letter code: MELMVKGAAALTVSEATFGREFNEALVHQVVVAYAAGARQGTRAQKTRSEVSGGGAKPWRQKGTGRARAGTIRSPLWRTGGVTFAAKPQDHSQKVNKKMYRGAMKSILSELVRQERLIVVDNFSVEAPKTKELVAKLKELELNDVLIVTGEVDENLFLAARNLYKVDARDVAGIDPVSLIAFNKVLMTADAVKQVEEMLA.

The disordered stretch occupies residues 42-65 (TRAQKTRSEVSGGGAKPWRQKGTG).

Belongs to the universal ribosomal protein uL4 family. In terms of assembly, part of the 50S ribosomal subunit.

One of the primary rRNA binding proteins, this protein initially binds near the 5'-end of the 23S rRNA. It is important during the early stages of 50S assembly. It makes multiple contacts with different domains of the 23S rRNA in the assembled 50S subunit and ribosome. In terms of biological role, forms part of the polypeptide exit tunnel. The chain is Large ribosomal subunit protein uL4 from Vibrio vulnificus (strain CMCP6).